A 2767-amino-acid chain; its full sequence is Serine/threonine-protein kinase ATM (2767 aa).

The FAT domain occupies 1713 to 2317 (NVVMASNHCQ…FYQLYPLVFA (605 aa)). One can recognise a PI3K/PI4K catalytic domain in the interval 2419 to 2734 (WTNETTQCGG…KLDGREAGTM (316 aa)). The segment at 2425 to 2431 (QCGGLNA) is G-loop. The interval 2601-2609 (GLGDRHTQN) is catalytic loop. Residues 2621 to 2645 (HIDFGIAFEQGKIQTTPETVPFRLT) form an activation loop region. An FATC domain is found at 2735-2767 (GDSNVEAQVERLINEATLPSNLCMLFPGWDPHL).

It belongs to the PI3/PI4-kinase family. ATM subfamily.

Its subcellular location is the nucleus. The protein localises to the chromosome. It is found in the telomere. The enzyme catalyses L-seryl-[protein] + ATP = O-phospho-L-seryl-[protein] + ADP + H(+). It catalyses the reaction L-threonyl-[protein] + ATP = O-phospho-L-threonyl-[protein] + ADP + H(+). In terms of biological role, serine/threonine-protein kinase which recognizes the substrate consensus sequence [ST]-Q. Required to suppress spontaneous apoptosis of proliferating cells during development, and for their proper differentiation. Required for female fertility. Protects telomeres from fusion, maybe by recruiting or maintaining chromatin-modifying complexes such as Su(var)205/HP1. May activate checkpoint signaling in response to DNA double-stranded breaks induced by low-dose ionizing radiation. May phosphorylate histone H2AV. In Drosophila melanogaster (Fruit fly), this protein is Serine/threonine-protein kinase ATM (tefu).